Here is a 173-residue protein sequence, read N- to C-terminus: Crossover junction endodeoxyribonuclease RuvC (173 aa).

Active-site residues include Asp-8, Glu-67, and Asp-139. Asp-8, Glu-67, and Asp-139 together coordinate Mg(2+).

It belongs to the RuvC family. In terms of assembly, homodimer which binds Holliday junction (HJ) DNA. The HJ becomes 2-fold symmetrical on binding to RuvC with unstacked arms; it has a different conformation from HJ DNA in complex with RuvA. In the full resolvosome a probable DNA-RuvA(4)-RuvB(12)-RuvC(2) complex forms which resolves the HJ. Mg(2+) is required as a cofactor.

It is found in the cytoplasm. The catalysed reaction is Endonucleolytic cleavage at a junction such as a reciprocal single-stranded crossover between two homologous DNA duplexes (Holliday junction).. Functionally, the RuvA-RuvB-RuvC complex processes Holliday junction (HJ) DNA during genetic recombination and DNA repair. Endonuclease that resolves HJ intermediates. Cleaves cruciform DNA by making single-stranded nicks across the HJ at symmetrical positions within the homologous arms, yielding a 5'-phosphate and a 3'-hydroxyl group; requires a central core of homology in the junction. The consensus cleavage sequence is 5'-(A/T)TT(C/G)-3'. Cleavage occurs on the 3'-side of the TT dinucleotide at the point of strand exchange. HJ branch migration catalyzed by RuvA-RuvB allows RuvC to scan DNA until it finds its consensus sequence, where it cleaves and resolves the cruciform DNA. The protein is Crossover junction endodeoxyribonuclease RuvC of Salmonella dublin (strain CT_02021853).